Consider the following 393-residue polypeptide: MSDEREVAEAATGEDASSPPPKTEAASDPQHPAASEGAAAAAASPPLLRCLVLTGFGGYDKVKLQSRPAAPPAPGPGQLTLRLRACGLNFADLMARQGLYDRLPPLPVTPGMEGAGVVIAVGEGVSDRKAGDRVMVLNRSGMWQEEVTVPSVQTFLIPEAMTFEEAAALLVNYITAYMVLFDFGNLQPGHSVLVHMAAGGVGMAAVQLCRTVENVTVFGTASASKHEALKENGVTHPIDYHTTDYVDEIKKISPKGVDIVMDPLGGSDTAKGYNLLKPMGKVVTYGMANLLTGPKRNLMALARTWWNQFSVTALQLLQANRAVCGFHLGYLDGEVELVSGVVARLLALYNQGHIKPHIDSVWPFEKVADAMKQMQEKKNVGKVLLVPGPEKEN.

Residues 1-40 are disordered; that stretch reads MSDEREVAEAATGEDASSPPPKTEAASDPQHPAASEGAAA. At serine 2 the chain carries N-acetylserine. Phosphoserine is present on residues serine 2, serine 18, serine 27, serine 35, and serine 44.

The protein belongs to the zinc-containing alcohol dehydrogenase family. Quinone oxidoreductase subfamily. As to expression, expressed in brain. Also expressed in glioblastoma cells.

The protein resides in the cytoplasm. It is found in the mitochondrion outer membrane. Its function is as follows. Possesses ATPase activity. Plays a part in calcium-regulated keratinocyte activation in epidermal repair mechanisms. Has no effect on cell proliferation. Negatively regulates mitochondrial fusion in cooperation with mitofusin proteins (MFN1-2). This Homo sapiens (Human) protein is Synaptic vesicle membrane protein VAT-1 homolog (VAT1).